The following is a 218-amino-acid chain: UPF0126 membrane protein SCO4104 (218 aa).

7 helical membrane-spanning segments follow: residues 8-28 (LLAL…LTAV), 37-57 (GVVV…DVLI), 64-84 (AFLD…AFAV), 91-111 (LEPA…VIGA), 118-138 (GLAV…GGTI), 154-174 (LYAI…ETGV), and 179-199 (AALG…HFGI).

It belongs to the UPF0126 family.

Its subcellular location is the cell membrane. This is UPF0126 membrane protein SCO4104 from Streptomyces coelicolor (strain ATCC BAA-471 / A3(2) / M145).